The primary structure comprises 323 residues: Dof zinc finger protein DOF3.6 (323 aa).

The segment at 76-130 adopts a Dof-type zinc-finger fold; that stretch reads LNCPRCDSTNTKFCYFNNYSLTQPRHFCKTCRRYWTRGGSLRNVPVGGGFRRNKR. Zn(2+) contacts are provided by Cys-78, Cys-81, Cys-103, and Cys-106. Disordered regions lie at residues 121–160 and 304–323; these read VGGG…SYSN and GGNS…HLSF. The span at 126–135 shows a compositional bias: basic residues; it reads RRNKRSKSRS. A compositionally biased stretch (low complexity) spans 136–159; the sequence is KSTVVVSTDNTTSTSSLTSRPSYS.

In terms of assembly, interacts with OBF4. In terms of tissue distribution, predominantly expressed in roots.

The protein resides in the nucleus. Transcription factor that binds specifically to a 5'-AA[AG]G-3' consensus core sequence. Enhances the DNA binding of OBF transcription factors to OCS elements. The chain is Dof zinc finger protein DOF3.6 (DOF3.6) from Arabidopsis thaliana (Mouse-ear cress).